The sequence spans 123 residues: Small ribosomal subunit protein uS12 (123 aa).

Residues 1-26 (MPTLNQLVRKPRKRPVAKSKVPALDA) are disordered. A 3-methylthioaspartic acid modification is found at Asp89. The segment at 104-123 (TAGVKNRKQSRSKYGAKRPK) is disordered. The segment covering 108-123 (KNRKQSRSKYGAKRPK) has biased composition (basic residues).

This sequence belongs to the universal ribosomal protein uS12 family. In terms of assembly, part of the 30S ribosomal subunit. Contacts proteins S8 and S17. May interact with IF1 in the 30S initiation complex.

Its function is as follows. With S4 and S5 plays an important role in translational accuracy. Interacts with and stabilizes bases of the 16S rRNA that are involved in tRNA selection in the A site and with the mRNA backbone. Located at the interface of the 30S and 50S subunits, it traverses the body of the 30S subunit contacting proteins on the other side and probably holding the rRNA structure together. The combined cluster of proteins S8, S12 and S17 appears to hold together the shoulder and platform of the 30S subunit. The polypeptide is Small ribosomal subunit protein uS12 (Acidithiobacillus ferrooxidans (strain ATCC 23270 / DSM 14882 / CIP 104768 / NCIMB 8455) (Ferrobacillus ferrooxidans (strain ATCC 23270))).